The primary structure comprises 522 residues: METAVAYYKDGVPYDDKGQVIITLLNGTPDGSGSGGGGGKGGSKSESSAAIHATAKWSTAQLKKTQAEQAARAKAAAEAQAKAKANRDALTQRLKDIVNEALRHNASRTPSATELAHANNAAMQAEDERLRLAKAEEKARKEAEAAEKAFQEAEQRRKEIEREKAETERQLKLAEAEEKRLAALSEEAKAVEIAQKKLSAAQSEVVKMDGEIKTLNSRLSSSIHARDAEMKTLAGKRNELAQASAKYKELDELVKKLSPRANDPLQNRPFFEATRRRVGAGKIREEKQKQVTASETRINRINADITQIQKAISQVSNNRNAGIARVHEAEENLKKAQNNLLNSQIKDAVDATVSFYQTLTEKYGEKYSKMAQELADKSKGKKIGNVNEALAAFEKYKDVLNKKFSKADRDAIFNALASVKYDDWAKHLDQFAKYLKITGHVSFGYDVVSDILKIKDTGDWKPLFLTLEKKAADAGVSYVVALLFSLLAGTTLGIWGIAIVTGILCSYIDKNKLNTINEVLGI.

Disordered regions lie at residues 26–52 (NGTPDGSGSGGGGGKGGSKSESSAAIH) and 136–165 (EEKARKEAEAAEKAFQEAEQRRKEIEREKA). The span at 30-42 (DGSGSGGGGGKGG) shows a compositional bias: gly residues. 2 helical membrane passes run 471–487 (AADAGVSYVVALLFSLL) and 494–510 (IWGIAIVTGILCSYIDK).

It belongs to the channel forming colicin family.

It is found in the cell membrane. This colicin is a channel-forming colicin. This class of transmembrane toxins depolarize the cytoplasmic membrane, leading to dissipation of cellular energy. In terms of biological role, colicins are polypeptide toxins produced by and active against E.coli and closely related bacteria. The polypeptide is Colicin-E1 (cea) (Escherichia coli).